The sequence spans 320 residues: Uridine phosphorylase 2 (320 aa).

Residues Gly-66, Arg-100, and 144-147 each bind phosphate; that span reads RIGT. Cys-95 and Cys-102 are disulfide-bonded. Uridine contacts are provided by residues 148 to 149 and 223 to 225; these read SG and QGR.

The protein belongs to the PNP/UDP phosphorylase family. Homodimer. Liver specific.

The enzyme catalyses uridine + phosphate = alpha-D-ribose 1-phosphate + uracil. The catalysed reaction is 2'-deoxyuridine + phosphate = 2-deoxy-alpha-D-ribose 1-phosphate + uracil. The protein operates within pyrimidine metabolism; UMP biosynthesis via salvage pathway; uracil from uridine (phosphorylase route): step 1/1. A conditional disulfide bridge can form within the protein that dislocates a critical phosphate-coordinating arginine Arg-100 away from the active site, disabling the enzyme. Functionally, catalyzes the reversible phosphorylytic cleavage of uridine to uracil and ribose-1-phosphate which can then be utilized as carbon and energy sources or in the rescue of pyrimidine bases for nucleotide synthesis. Shows broad substrate specificity and can also accept deoxyuridine and other analogous compounds. This is Uridine phosphorylase 2 from Mus musculus (Mouse).